The sequence spans 169 residues: Copper-resistant cuproprotein CopI (169 aa).

The signal sequence occupies residues 1–20 (MIKKTLLVIALTFTVTTAFA). H98, C153, H158, and M163 together coordinate Cu(2+).

This sequence belongs to the CopI family.

The protein localises to the periplasm. Involved in copper tolerance. Mediates copper tolerance in aerobiosis. May also mediate tolerance under anaerobiosis. Not required for virulence or colonization in the mouse model. This chain is Copper-resistant cuproprotein CopI, found in Vibrio cholerae serotype O1 (strain ATCC 39315 / El Tor Inaba N16961).